Here is a 245-residue protein sequence, read N- to C-terminus: Ninjurin-A (245 aa).

Topologically, residues methionine 1 to proline 170 are extracellular. Residues asparagine 19 and asparagine 28 are each glycosylated (N-linked (GlcNAc...) asparagine). The segment at histidine 32–glycine 101 is disordered. Residues asparagine 92–glycine 101 are compositionally biased toward low complexity. The interval lysine 135–alanine 146 is helix alpha1. The segment at serine 149 to histidine 165 is helix alpha2. Residues serine 171–leucine 191 form a helical membrane-spanning segment. Topologically, residues asparagine 192–asparagine 211 are cytoplasmic. A helical membrane pass occupies residues tyrosine 212–valine 232. Over aspartate 233–threonine 245 the chain is Extracellular.

The protein belongs to the ninjurin family. Homooligomer. Post-translationally, cleaved by Mmp1 protease to generate the Secreted ninjurin-A form.

The protein localises to the cell membrane. The protein resides in the secreted. Its function is as follows. Effector of non-apoptotic necrotic cell death that mediates plasma membrane rupture (cytolysis): oligomerizes in response to death stimuli and promotes plasma membrane rupture by introducing hydrophilic faces of 2 alpha helices into the hydrophobic membrane, leading to release intracellular molecules that propagate the inflammatory response. Also acts as a homophilic transmembrane adhesion molecule that promotes cell adhesion by mediating homophilic interactions via its extracellular region. Secreted form generated by cleavage, which acts as a negative regulator of cell adhesion. Promotes the loss of cell adhesion in a cell non-autonomous manner. The sequence is that of Ninjurin-A from Drosophila melanogaster (Fruit fly).